Here is a 574-residue protein sequence, read N- to C-terminus: Amino-acid acetyltransferase, mitochondrial (574 aa).

Residues 1–13 (MWRRIFAHGLKYD) constitute a mitochondrion transit peptide. An N-acetyltransferase domain is found at 392 to 560 (KGAKPSNNSP…KRLREFMRSV (169 aa)).

The protein belongs to the acetyltransferase family. In terms of assembly, interacts with the acetylglutamate kinase chain of AGR5,6.

It is found in the mitochondrion. The catalysed reaction is L-glutamate + acetyl-CoA = N-acetyl-L-glutamate + CoA + H(+). It functions in the pathway amino-acid biosynthesis; L-arginine biosynthesis; N(2)-acetyl-L-ornithine from L-glutamate: step 1/4. Its activity is regulated as follows. Feedback inhibition by L-arginine. In terms of biological role, N-acetylglutamate synthase involved in arginine biosynthesis. This chain is Amino-acid acetyltransferase, mitochondrial (ARG2), found in Saccharomyces cerevisiae (strain YJM789) (Baker's yeast).